We begin with the raw amino-acid sequence, 162 residues long: Succinate dehydrogenase assembly factor 2, mitochondrial (162 aa).

A mitochondrion-targeting transit peptide spans methionine 1 to tryptophan 35.

This sequence belongs to the SDHAF2 family. Interacts with SDH1 within the SDH catalytic dimer.

The protein localises to the mitochondrion matrix. In terms of biological role, plays an essential role in the assembly of succinate dehydrogenase (SDH), an enzyme complex (also referred to as respiratory complex II) that is a component of both the tricarboxylic acid (TCA) cycle and the mitochondrial electron transport chain, and which couples the oxidation of succinate to fumarate with the reduction of ubiquinone (coenzyme Q) to ubiquinol. Required for flavinylation (covalent attachment of FAD) of the flavoprotein subunit SDH1 of the SDH catalytic dimer. It is unclear whether it participates in the chemistry of FAD attachment (enzymatic function) or acts as a chaperone that maintains SDH1 in a conformation that is susceptible to autocatalytic FAD attachment. Does not bind FAD or FADH(2) in vitro. Involved in sporulation. Required for the full activation of the early meiotic inducer IME1. This Saccharomyces cerevisiae (strain ATCC 204508 / S288c) (Baker's yeast) protein is Succinate dehydrogenase assembly factor 2, mitochondrial.